The sequence spans 486 residues: Nucleolar GTP-binding protein 2 (486 aa).

Positions 1–20 (MGTGKKEKSRRIREGDTKDG) are disordered. 3 positions are modified to phosphoserine: serine 60, serine 85, and serine 155. Positions 212 to 373 (WNELYKVIDS…LIDCPGIVPP (162 aa)) constitute a CP-type G domain. GTP-binding positions include 322-329 (GYPNTGKS) and 366-370 (DCPGI).

It belongs to the TRAFAC class YlqF/YawG GTPase family. NOG2 subfamily.

Its subcellular location is the nucleus. The protein localises to the nucleolus. Its function is as follows. GTPase that associates with pre-60S ribosomal subunits in the nucleolus and is required for their nuclear export and maturation. The polypeptide is Nucleolar GTP-binding protein 2 (NOG2) (Saccharomyces cerevisiae (strain ATCC 204508 / S288c) (Baker's yeast)).